The following is a 316-amino-acid chain: HTH-type transcriptional regulator PecT (316 aa).

The 58-residue stretch at 11 to 68 (LDLDLLRTFVAVADLNTFAAAAVAVCRTQSAVSQQMQRLEQLIGKELFARHGRNKLLT) folds into the HTH lysR-type domain. Residues 28-47 (FAAAAVAVCRTQSAVSQQMQ) constitute a DNA-binding region (H-T-H motif). The interval 293–316 (LPVSTGTESELREPPTDESLKDIT) is disordered. Residues 301-316 (SELREPPTDESLKDIT) are compositionally biased toward basic and acidic residues.

This sequence belongs to the LysR transcriptional regulatory family.

Functionally, regulates pectinase gene expression. This Dickeya dadantii (strain 3937) (Erwinia chrysanthemi (strain 3937)) protein is HTH-type transcriptional regulator PecT (pecT).